Consider the following 630-residue polypeptide: Polypeptide N-acetylgalactosaminyltransferase 5 (630 aa).

Residues 1-20 (MTFSTFTRKMRGRMRSNTCR) lie on the Cytoplasmic side of the membrane. The helical; Signal-anchor for type II membrane protein transmembrane segment at 21–38 (IVLLTSLVWVIFDFVLIA) threads the bilayer. Residues 39-630 (RYSDCIGKDG…MESKFKWQAH (592 aa)) lie on the Lumenal side of the membrane. Asn-166 is a glycosylation site (N-linked (GlcNAc...) asparagine). Intrachain disulfides connect Cys-177-Cys-410, Cys-401-Cys-479, Cys-513-Cys-530, Cys-553-Cys-568, and Cys-594-Cys-611. Positions 186–296 (LPTTSIVIVF…EGWLEPLLAR (111 aa)) are catalytic subdomain A. 2 residues coordinate substrate: Asp-227 and Arg-257. Asp-280 and His-282 together coordinate Mn(2+). Positions 356 to 418 (PLRTPTMAGG…PCSHVGHVFR (63 aa)) are catalytic subdomain B. Trp-387 contacts substrate. His-415 contributes to the Mn(2+) binding site. Substrate is bound by residues Arg-418 and Tyr-423. A Ricin B-type lectin domain is found at 500-622 (YYLGEIRNAE…YGKGQQWLME (123 aa)).

The protein belongs to the glycosyltransferase 2 family. GalNAc-T subfamily. Mn(2+) is required as a cofactor. Expressed during oogenesis, in the somatically derived follicle cells that surround the developing oocyte, which are involved in the maturation of the oocyte and construction of the egg shell, as well as playing a role in subsequent embryonic pattern formation. During embryonic stages 9-11, expressed in the primordium of the foregut, midgut and hindgut. Expressed in salivary glands from embryonic stage 12 onwards. During embryonic stages 12-13, expressed in the posterior midgut and hindgut. During embryonic stages 14-17, expressed in the hindgut and the posterior spiracles. Expression is also detected in the epidermis and antennomaxillary complex at embryonic stages 16-17. In third instar larvae, ubiquitously expressed in wing, eye-antennal, leg and haltere imaginal disks.

It is found in the golgi apparatus membrane. The catalysed reaction is L-seryl-[protein] + UDP-N-acetyl-alpha-D-galactosamine = a 3-O-[N-acetyl-alpha-D-galactosaminyl]-L-seryl-[protein] + UDP + H(+). It catalyses the reaction L-threonyl-[protein] + UDP-N-acetyl-alpha-D-galactosamine = a 3-O-[N-acetyl-alpha-D-galactosaminyl]-L-threonyl-[protein] + UDP + H(+). The protein operates within protein modification; protein glycosylation. Functionally, catalyzes the initial reaction in O-linked oligosaccharide biosynthesis, the transfer of an N-acetyl-D-galactosamine residue to a serine or threonine residue on the protein receptor. It can both act as a peptide transferase that transfers GalNAc onto unmodified peptide substrates, and as a glycopeptide transferase that requires the prior addition of a GalNAc on a peptide before adding additional GalNAc moieties. Prefers EA2 as substrate. In the larval midgut, required for O-glycosylation of apical and luminal proteins within copper cells enabling proper gut acidification. The sequence is that of Polypeptide N-acetylgalactosaminyltransferase 5 from Drosophila melanogaster (Fruit fly).